Here is a 443-residue protein sequence, read N- to C-terminus: ATP-dependent protease ATPase subunit HslU (443 aa).

Residues I18, 60 to 65, D256, E321, and R393 contribute to the ATP site; that span reads GVGKTE.

Belongs to the ClpX chaperone family. HslU subfamily. In terms of assembly, a double ring-shaped homohexamer of HslV is capped on each side by a ring-shaped HslU homohexamer. The assembly of the HslU/HslV complex is dependent on binding of ATP.

It is found in the cytoplasm. In terms of biological role, ATPase subunit of a proteasome-like degradation complex; this subunit has chaperone activity. The binding of ATP and its subsequent hydrolysis by HslU are essential for unfolding of protein substrates subsequently hydrolyzed by HslV. HslU recognizes the N-terminal part of its protein substrates and unfolds these before they are guided to HslV for hydrolysis. The polypeptide is ATP-dependent protease ATPase subunit HslU (Pectobacterium carotovorum subsp. carotovorum (strain PC1)).